The chain runs to 102 residues: Small ribosomal subunit protein uS10 (102 aa).

This sequence belongs to the universal ribosomal protein uS10 family. In terms of assembly, part of the 30S ribosomal subunit.

In terms of biological role, involved in the binding of tRNA to the ribosomes. In Streptococcus pneumoniae (strain Taiwan19F-14), this protein is Small ribosomal subunit protein uS10.